The following is a 112-amino-acid chain: uncharacterized protein (112 aa).

The chain crosses the membrane as a helical span at residues 62-82 (THSFIFFILFLFIFIFLTFSH).

The protein localises to the membrane. This is an uncharacterized protein from Saccharomyces cerevisiae (strain ATCC 204508 / S288c) (Baker's yeast).